A 341-amino-acid polypeptide reads, in one-letter code: tRNA N6-adenosine threonylcarbamoyltransferase (341 aa).

H118 and H122 together coordinate Fe cation. Residues 141-145 (LVSGG), D174, G187, and N281 contribute to the substrate site. Fe cation is bound at residue D309.

It belongs to the KAE1 / TsaD family. Fe(2+) serves as cofactor.

It is found in the cytoplasm. The enzyme catalyses L-threonylcarbamoyladenylate + adenosine(37) in tRNA = N(6)-L-threonylcarbamoyladenosine(37) in tRNA + AMP + H(+). In terms of biological role, required for the formation of a threonylcarbamoyl group on adenosine at position 37 (t(6)A37) in tRNAs that read codons beginning with adenine. Is involved in the transfer of the threonylcarbamoyl moiety of threonylcarbamoyl-AMP (TC-AMP) to the N6 group of A37, together with TsaE and TsaB. TsaD likely plays a direct catalytic role in this reaction. This is tRNA N6-adenosine threonylcarbamoyltransferase from Desulfitobacterium hafniense (strain Y51).